A 441-amino-acid polypeptide reads, in one-letter code: Hexane cyclase gkaB (441 aa).

An N-terminal signal peptide occupies residues 1 to 25 (MTKFLAGAAIVLAVAFGSFFSQSST). N-linked (GlcNAc...) asparagine glycans are attached at residues asparagine 77, asparagine 153, asparagine 184, and asparagine 308.

The protein belongs to the Diels-Alderase family.

It functions in the pathway mycotoxin biosynthesis. Hexane cyclase; part of the gene cluster that mediates the biosynthesis of GKK1032, fungal natural products containing a macrocyclic para-cyclophane connected to a decahydrofluorene ring system that show potent antitumor activities. Within the pathway, gkaB functions synergistically with gkaX and gkaZ to form the cyclophane. The pathway begins with the PKS-NRPS gkaA which, with the help of the trans-enoyl reductase gkaC, synthesizes the polyketide-tyrosyl acyl thioester product which can be reductively off-loaded by the terminal reductase (R) domain in gkaA. The alpha/beta hydrolase gkaG is then required to catalyze the subsequent Knoevenagel condensation that affords the 3-pyrrolin-2-one ring, whereas the three proteins gkaB, gkaX and gkaZ then function synergistically to form the cyclophane. This is Hexane cyclase gkaB from Penicillium citrinum.